We begin with the raw amino-acid sequence, 339 residues long: D-erythrose-4-phosphate dehydrogenase (339 aa).

11-12 (RI) contributes to the NAD(+) binding site. Substrate contacts are provided by residues 153–155 (SCT), Arg199, 212–213 (TK), and Arg235. The active-site Nucleophile is Cys154. Asn317 contributes to the NAD(+) binding site.

The protein belongs to the glyceraldehyde-3-phosphate dehydrogenase family. Epd subfamily. As to quaternary structure, homotetramer.

The protein localises to the cytoplasm. The enzyme catalyses D-erythrose 4-phosphate + NAD(+) + H2O = 4-phospho-D-erythronate + NADH + 2 H(+). The protein operates within cofactor biosynthesis; pyridoxine 5'-phosphate biosynthesis; pyridoxine 5'-phosphate from D-erythrose 4-phosphate: step 1/5. Catalyzes the NAD-dependent conversion of D-erythrose 4-phosphate to 4-phosphoerythronate. The chain is D-erythrose-4-phosphate dehydrogenase from Shewanella frigidimarina (strain NCIMB 400).